A 513-amino-acid chain; its full sequence is MGAPVLPAAFGFLASARTGGGRAPGPVFATRGSHTDIDTPQGERSLAATLVHAPSVAPDRAVARSLTGAPTTAVLAGEIYNRDELLSVLPAGPAPEGDAELVLRLLERYDLHAFRLVNGRFATVVRTGDRVLLATDHAGSVPLYTCVAPGEVRASTEAKALAAHRDPKGFPLADARRVAGLTGVYQVPAGAVMDIDLGSGTAVTHRTWTPGLSRRILPEGEAVAAVRAALEKAVAQRVTPGDTPLVVLSGGIDSSGVAACAHRAAGELDTVSMGTDTSNEFREARAVVDHLRTRHREITIPTTELLAQLPYAVWASESVDPDIIEYLLPLTALYRALDGPERRILTGYGADIPLGGMHREDRLPALDTVLAHDMATFDGLNEMSPVLSTLAGHWTTHPYWDREVLDLLVSLEAGLKRRHGRDKWVLRAAMADALPAETVNRPKLGVHEGSGTTSSFSRLLLDHGVAEDRVHEAKRQVVRELFDLTVGGGRHPSEVDTDDVVRSVADRTARGAA.

Mg(2+)-binding residues include Asp-253 and Asp-351.

It belongs to the asparagine synthetase family. As to quaternary structure, homodimer. The cofactor is Mg(2+).

The enzyme catalyses N(2)-(2-carboxyethyl)-L-arginine + ATP = deoxyamidinoproclavaminate + AMP + diphosphate + H(+). It functions in the pathway antibiotic biosynthesis; clavulanate biosynthesis; clavulanate from D-glyceraldehyde 3-phosphate and L-arginine: step 2/8. This Streptomyces clavuligerus protein is Carboxyethyl-arginine beta-lactam-synthase (bls).